Consider the following 276-residue polypeptide: Phospholipid phosphatase 2 (276 aa).

Residues 1–4 (MERR) are Cytoplasmic-facing. Residues 5-25 (WVFVLLDVLCVLVASLPFIIL) traverse the membrane as a helical segment. The Lumenal segment spans residues 26-51 (TLVNAPYKRGFYCGDDSIRYPYRPDT). The chain crosses the membrane as a helical span at residues 52–72 (ITHGLMAGVIITATVILVSLG). Over 73–87 (EAYLVYTDRLYSRSN) the chain is Cytoplasmic. Residues 88 to 108 (FNNYVAAIYKVLGTFLFGAAV) form a helical membrane-spanning segment. The Lumenal segment spans residues 109-161 (SQSLTDLAKYMIGRLRPSFLAVCDPDWSQVNCSGYVQLEVCRGSPANVTEARL). The segment at 117 to 125 (KYMIGRLRP) is phosphatase sequence motif I. Asn-139 and Asn-155 each carry an N-linked (GlcNAc...) asparagine glycan. A helical membrane pass occupies residues 162–182 (SFYSGHSSFGMYCMLFLALYV). The tract at residues 164–167 (YSGH) is phosphatase sequence motif II. His-167 serves as the catalytic Proton donors. The Cytoplasmic segment spans residues 183–189 (QARLCWK). The chain crosses the membrane as a helical span at residues 190 to 210 (WARLLRPTVQFFLVAFAIYVG). The Lumenal segment spans residues 211–218 (YTRVSDHK). Positions 212–223 (TRVSDHKHHWSD) are phosphatase sequence motif III. His-219 acts as the Nucleophile in catalysis. The helical transmembrane segment at 219–239 (HHWSDVLVGLLQGALVACLTV) threads the bilayer. Residues 240-276 (RYVSDFFKSRPPQPCQEDEVPERKPSLSLTLTLGDRP) are Cytoplasmic-facing. Residues 251–276 (PQPCQEDEVPERKPSLSLTLTLGDRP) are disordered.

Belongs to the PA-phosphatase related phosphoesterase family. Forms functional homodimers and homooligomers. Can also form heterooligomers with PLPP1 and PLPP3. N-glycosylated. As to expression, expressed at high levels in lung, liver and kidney; at low levels in heart and brain, and was not detected in skeletal muscle.

The protein localises to the membrane. It is found in the cell membrane. Its subcellular location is the early endosome membrane. The protein resides in the endoplasmic reticulum membrane. The catalysed reaction is a 1,2-diacyl-sn-glycero-3-phosphate + H2O = a 1,2-diacyl-sn-glycerol + phosphate. It carries out the reaction 1,2-dihexadecanoyl-sn-glycero-3-phosphate + H2O = 1,2-dihexadecanoyl-sn-glycerol + phosphate. The enzyme catalyses 1,2-di-(9Z-octadecenoyl)-sn-glycero-3-phosphate + H2O = 1,2-di-(9Z-octadecenoyl)-sn-glycerol + phosphate. It catalyses the reaction a monoacyl-sn-glycero-3-phosphate + H2O = a monoacylglycerol + phosphate. The catalysed reaction is (9Z)-octadecenoyl-sn-glycero-3-phosphate + H2O = (9Z-octadecenoyl)-glycerol + phosphate. It carries out the reaction sphing-4-enine 1-phosphate + H2O = sphing-4-enine + phosphate. The enzyme catalyses an N-acylsphing-4-enine 1-phosphate + H2O = an N-acylsphing-4-enine + phosphate. It catalyses the reaction N-(octanoyl)-sphing-4-enine-1-phosphate + H2O = N-octanoylsphing-4-enine + phosphate. The catalysed reaction is N-(9Z-octadecenoyl)-ethanolamine phosphate + H2O = N-(9Z-octadecenoyl) ethanolamine + phosphate. It participates in lipid metabolism; phospholipid metabolism. Magnesium-independent phospholipid phosphatase. Insensitive to N-ethylmaleimide. Functionally, magnesium-independent phospholipid phosphatase that catalyzes the dephosphorylation of a variety of glycerolipid and sphingolipid phosphate esters including phosphatidate/PA, lysophosphatidate/LPA, sphingosine 1-phosphate/S1P and ceramide 1-phosphate/C1P. Has no apparent extracellular phosphatase activity and therefore most probably acts intracellularly. Also acts on N-oleoyl ethanolamine phosphate/N-(9Z-octadecenoyl)-ethanolamine phosphate, a potential physiological compound. Through dephosphorylation of these bioactive lipid mediators produces new bioactive compounds and may regulate signal transduction in different cellular processes. Indirectly regulates, for instance, cell cycle G1/S phase transition through its phospholipid phosphatase activity. In Mus musculus (Mouse), this protein is Phospholipid phosphatase 2.